The primary structure comprises 54 residues: uncharacterized protein (54 aa).

A helical membrane pass occupies residues 6–26; the sequence is ILIYLLIFVAGIVIGKIRINV.

It is found in the host membrane. This is an uncharacterized protein from Acidianus convivator (ABV).